A 396-amino-acid chain; its full sequence is Tryptophan synthase beta chain (396 aa).

Residue Lys86 is modified to N6-(pyridoxal phosphate)lysine.

It belongs to the TrpB family. As to quaternary structure, tetramer of two alpha and two beta chains. Pyridoxal 5'-phosphate is required as a cofactor.

It catalyses the reaction (1S,2R)-1-C-(indol-3-yl)glycerol 3-phosphate + L-serine = D-glyceraldehyde 3-phosphate + L-tryptophan + H2O. Its pathway is amino-acid biosynthesis; L-tryptophan biosynthesis; L-tryptophan from chorismate: step 5/5. The beta subunit is responsible for the synthesis of L-tryptophan from indole and L-serine. In Proteus mirabilis (strain HI4320), this protein is Tryptophan synthase beta chain.